We begin with the raw amino-acid sequence, 427 residues long: UPF0229 protein YeaH (427 aa).

The segment covering 79 to 90 (NDHFVQNDRIER) has biased composition (basic and acidic residues). The tract at residues 79-110 (NDHFVQNDRIERPQGGGGGSGSGQGQASQDGE) is disordered. Positions 92-102 (QGGGGGSGSGQ) are enriched in gly residues.

The protein belongs to the UPF0229 family.

The chain is UPF0229 protein YeaH from Escherichia coli O9:H4 (strain HS).